The primary structure comprises 112 residues: Replication initiation control protein YabA (112 aa).

The Zn(2+) site is built by His-85, Cys-87, Cys-101, and Cys-104.

This sequence belongs to the YabA family. In terms of assembly, homotetramer. Interacts with both DnaA and DnaN, acting as a bridge between these two proteins. Zn(2+) is required as a cofactor.

Its subcellular location is the cytoplasm. It is found in the nucleoid. Functionally, involved in control of chromosome replication initiation. Inhibits the cooperative binding of DnaA to the oriC region, thus negatively regulating initiation of chromosome replication. Inhibits the ability of DnaA-ATP to form a helix on DNA; does not disassemble preformed DnaA-DNA helices. Decreases the residence time of DnaA on the chromosome at its binding sites (oriC, replication forks and promoter-binding sites). Tethers DnaA to the replication machinery via the DNA polymerase beta sliding clamp subunit (dnaN). Associates with oriC and other DnaA targets on the chromosome in a DnaA-dependent manner. In Lacticaseibacillus casei (strain BL23) (Lactobacillus casei), this protein is Replication initiation control protein YabA.